The chain runs to 273 residues: Small ribosomal subunit protein uS3 (273 aa).

Residues 43–111 enclose the KH type-2 domain; that stretch reads IRQLMSTGME…QVQLNILEVK (69 aa). Residues 218–227 are compositionally biased toward low complexity; sequence QQAAAAPSRG. Residues 218-273 are disordered; sequence QQAAAAPSRGRAGDRPGRPGGDRRRRNDRPAAEAAPAAVEAPAAEAAAPAAEGGQA. Positions 228–239 are enriched in basic and acidic residues; sequence RAGDRPGRPGGD. Residues 249-273 are compositionally biased toward low complexity; the sequence is AEAAPAAVEAPAAEAAAPAAEGGQA.

Belongs to the universal ribosomal protein uS3 family. As to quaternary structure, part of the 30S ribosomal subunit. Forms a tight complex with proteins S10 and S14.

In terms of biological role, binds the lower part of the 30S subunit head. Binds mRNA in the 70S ribosome, positioning it for translation. The chain is Small ribosomal subunit protein uS3 from Paenarthrobacter aurescens (strain TC1).